The primary structure comprises 146 residues: Hemoglobin subunit beta-1 (146 aa).

Residues 2–146 (HWTEKERTII…VVSALGKQYH (145 aa)) form the Globin domain. Heme b contacts are provided by His-63 and His-92.

The protein belongs to the globin family. Hb1 is a heterotetramer of two alpha chains and two beta-1 chains. In terms of tissue distribution, red blood cells.

Functionally, involved in oxygen transport from gills to the various peripheral tissues. The protein is Hemoglobin subunit beta-1 of Dissostichus eleginoides (Patagonian toothfish).